Here is a 396-residue protein sequence, read N- to C-terminus: Na(+)/H(+) antiporter NhaA 1 (396 aa).

11 consecutive transmembrane segments (helical) span residues 18 to 38, 60 to 80, 95 to 115, 126 to 146, 155 to 175, 178 to 198, 201 to 221, 262 to 282, 295 to 315, 333 to 353, and 362 to 382; these read LLLI…LSWL, LLLW…GLEV, IALP…IYTG, GWAI…ALLG, LFLL…IALF, ADLS…LFIL, TGVT…ICVL, VAYG…LAGI, IAAG…WIGV, GMAV…TLAL, and AARL…YYLL.

Belongs to the NhaA Na(+)/H(+) (TC 2.A.33) antiporter family.

The protein localises to the cell inner membrane. It carries out the reaction Na(+)(in) + 2 H(+)(out) = Na(+)(out) + 2 H(+)(in). In terms of biological role, na(+)/H(+) antiporter that extrudes sodium in exchange for external protons. This Syntrophotalea carbinolica (strain DSM 2380 / NBRC 103641 / GraBd1) (Pelobacter carbinolicus) protein is Na(+)/H(+) antiporter NhaA 1.